The chain runs to 89 residues: Small ribosomal subunit protein uS14 (89 aa).

This sequence belongs to the universal ribosomal protein uS14 family. In terms of assembly, part of the 30S ribosomal subunit. Contacts proteins S3 and S10.

Its function is as follows. Binds 16S rRNA, required for the assembly of 30S particles and may also be responsible for determining the conformation of the 16S rRNA at the A site. The protein is Small ribosomal subunit protein uS14 of Cytophaga hutchinsonii (strain ATCC 33406 / DSM 1761 / CIP 103989 / NBRC 15051 / NCIMB 9469 / D465).